The sequence spans 101 residues: Urease subunit beta (101 aa).

The protein belongs to the urease beta subunit family. In terms of assembly, heterotrimer of UreA (gamma), UreB (beta) and UreC (alpha) subunits. Three heterotrimers associate to form the active enzyme.

It is found in the cytoplasm. It carries out the reaction urea + 2 H2O + H(+) = hydrogencarbonate + 2 NH4(+). It participates in nitrogen metabolism; urea degradation; CO(2) and NH(3) from urea (urease route): step 1/1. The polypeptide is Urease subunit beta (Burkholderia orbicola (strain AU 1054)).